Reading from the N-terminus, the 106-residue chain is Large ribosomal subunit protein uL24 (106 aa).

This sequence belongs to the universal ribosomal protein uL24 family. As to quaternary structure, part of the 50S ribosomal subunit.

Functionally, one of two assembly initiator proteins, it binds directly to the 5'-end of the 23S rRNA, where it nucleates assembly of the 50S subunit. One of the proteins that surrounds the polypeptide exit tunnel on the outside of the subunit. This Thermosipho africanus (strain TCF52B) protein is Large ribosomal subunit protein uL24.